The primary structure comprises 254 residues: MNIKLLPEVGDLVVVKITEVKNFGANGILEEYPGVEGYIHISEVATGWVKHIRSYLREGQRVVCKVINVNQERKNVDLSLKRVNQHQSREKIAEWKNEQKADKLFEIVCSKLNKDLEACKKEFGVRLVELYGTLFAAFESAAAAEGEWLPDINGDWKDTFVEVAKENITIPEVSVAGYFEAYSLASDGVEKIKEVLTIPPEIGKAELEYVGAPRYRIVVRDKDYKKAEETLKKIVQSVTDKAKKLQVELEFSRQ.

One can recognise an S1 motif domain in the interval 10–81 (GDLVVVKITE…ERKNVDLSLK (72 aa)).

This sequence belongs to the eIF-2-alpha family. Heterotrimer composed of an alpha, a beta and a gamma chain.

Its function is as follows. eIF-2 functions in the early steps of protein synthesis by forming a ternary complex with GTP and initiator tRNA. The sequence is that of Translation initiation factor 2 subunit alpha from Thermoplasma volcanium (strain ATCC 51530 / DSM 4299 / JCM 9571 / NBRC 15438 / GSS1).